The following is a 196-amino-acid chain: Cell division protein SepF (196 aa).

Residues 16-81 form a disordered region; that stretch reads EDDEEFNEPA…KRAGSTFTKP (66 aa). Residues 56 to 69 show a composition bias toward polar residues; that stretch reads RPAQSTSKAQTQTA.

It belongs to the SepF family. Homodimer. Interacts with FtsZ.

The protein localises to the cytoplasm. In terms of biological role, cell division protein that is part of the divisome complex and is recruited early to the Z-ring. Probably stimulates Z-ring formation, perhaps through the cross-linking of FtsZ protofilaments. Its function overlaps with FtsA. This Lactococcus lactis subsp. lactis (strain IL1403) (Streptococcus lactis) protein is Cell division protein SepF.